We begin with the raw amino-acid sequence, 946 residues long: MKLLSKVFVTALGLTSIVNAAPTSSSSAEEAQKTVPVELSIGVKQLPNIHNDSAVDANAVAKGYSLVNVSLTARGLTGILKLKEATNIYGYDFEYLNLSVEYQSDTRLNVHIEPTDLTDVFVLPEELVVKPKLEGDAKTFNFENSDLVFEYDEEDFGFEVLRSSTREVLFSTKGNPLVFSNQFIQFNTTLPKGHSITGLGESIHGSLNEPGVVKTLYANDIADPIDGNIYGVHPVYYDQRYNTNTTHAVYWRTSAIQEVVVGETSLTWRALSGVIDLYFFSGPDPKDVIQQYVSEIGLPAMQPYWALGYHQCRWGYDTVESLETVVENFKKFDIPLETIWSDIDYMDGYKDFTNDPYRFPTDKFRKFLDDLHNNSQHYVPIFDAAIYVPNPNNATDNDYEPFHLGNESDVFLKNPDGSLYIGAVWPGYTVFPDFLANNTQEYWNKMFKDWYERIPFDGIWTDMNEVSSFCVGSCGTGRYFDNPVHPPFEVGYSGSDYPLGFDKSNASEWKSISEAAAATKTTTTTSSSTSTSIDGKNTLAPGKGNINYPPYAINNNQGDHDLATHAISPNATHADGTVEYDIHNIYGLIQERAIYEALLEIHPNKRPFIIGRSSFAGSGKYMGHWGGDNYADYYMMYFSIPQALSMGLSGIPFFGVDACGFNGNTDMELCSRWMQLASFFPFYRNHNVLGAIPQEPYVWEGVMNATKTSINVRYSLLPYYYTLLHESHVTGIPIMRAFNWQFPYSKELAGVDTQFFVGDALLVTPVLEPGVNHTKGVFPGENAVYYDFYTHKKQKFTAGKNETLAAPLGHIPLHIKGGNIIPTQEPGYTTTESRKNPFGLLVALDAEGTASGKLYLDDGESVDVEEALYVDFVASKNKLVASVFGEYEVRQPLANVTILGVDSEPKKVLFNNETVSHNYENGAVYLTDLEKFTKEGAFAEEFSIQW.

The signal sequence occupies residues 1-20; it reads MKLLSKVFVTALGLTSIVNA. Residues Asn51, Asn68, Asn97, Asn187, Asn244, Asn373, Asn393, Asn406, and Asn437 are each glycosylated (N-linked (GlcNAc...) asparagine). Catalysis depends on residues Asp462 and Glu465. The N-linked (GlcNAc...) asparagine glycan is linked to Asn505. Low complexity predominate over residues 517-532; sequence AATKTTTTTSSSTSTS. Positions 517–541 are disordered; that stretch reads AATKTTTTTSSSTSTSIDGKNTLAP. A glycan (N-linked (GlcNAc...) asparagine) is linked at Asn570. Asp628 functions as the Proton donor in the catalytic mechanism. 5 N-linked (GlcNAc...) asparagine glycosylation sites follow: Asn704, Asn772, Asn801, Asn895, and Asn912.

This sequence belongs to the glycosyl hydrolase 31 family. Post-translationally, the N-terminus is blocked.

Its subcellular location is the secreted. It is found in the cell wall. The protein localises to the membrane. The enzyme catalyses Hydrolysis of terminal (1-&gt;4)-linked alpha-D-glucose residues successively from non-reducing ends of the chains with release of beta-D-glucose.. The polypeptide is Glucoamylase 1 (GAM1) (Candida albicans (strain SC5314 / ATCC MYA-2876) (Yeast)).